The primary structure comprises 174 residues: Regulator of G-protein signaling 8 (174 aa).

Residues 46–162 (SFDILLSNKY…IRSKIYQDLL (117 aa)) form the RGS domain.

It is found in the cell membrane. It localises to the membrane. Its subcellular location is the perikaryon. The protein localises to the cell projection. The protein resides in the dendrite. It is found in the nucleus. In terms of biological role, regulates G protein-coupled receptor signaling cascades, including signaling via muscarinic acetylcholine receptors and dopamine receptors. Inhibits signal transduction by increasing the GTPase activity of G protein alpha subunits, thereby driving them into their inactive GDP-bound form. Modulates the activity of potassium channels that are activated in response to G protein-coupled receptor signaling. This is Regulator of G-protein signaling 8 (rgs8) from Danio rerio (Zebrafish).